A 352-amino-acid polypeptide reads, in one-letter code: Ni-sirohydrochlorin a,c-diamide reductive cyclase complex, component CfbD (352 aa).

Belongs to the NifD/NifK/NifE/NifN family. As to quaternary structure, homodimer or monomer. The Ni-sirohydrochlorin a,c-diamide reductive cyclase complex is composed of a NifH homolog component CfbC and a NifD homolog component CfbD. Requires [4Fe-4S] cluster as cofactor.

The enzyme catalyses Ni-sirohydrochlorin a,c-diamide + 3 AH2 + ATP + H2O = 15,17(3)-seco-F430-17(3)-acid + 3 A + ADP + phosphate. Functionally, involved in the biosynthesis of the unique nickel-containing tetrapyrrole coenzyme F430, the prosthetic group of methyl-coenzyme M reductase (MCR), which plays a key role in methanogenesis and anaerobic methane oxidation. Catalyzes both the six-electron reduction of the tetrahydroporphyrin ring system and the gamma-lactamization of the c-acetamide side chain of Ni-sirohydrochlorin a,c-diamide to yield 15,17(3)-seco-F430-17(3)-acid (seco-F430), the last intermediate in the biosynthesis of the coenzyme F430. The chain is Ni-sirohydrochlorin a,c-diamide reductive cyclase complex, component CfbD from Methanocaldococcus jannaschii (strain ATCC 43067 / DSM 2661 / JAL-1 / JCM 10045 / NBRC 100440) (Methanococcus jannaschii).